The following is a 417-amino-acid chain: Peptidyl-Asp metalloendopeptidase (417 aa).

Residues 1–23 (MKSKSMCTTVGLIAMCLAGSAAA) form the signal peptide. H331 serves as a coordination point for Zn(2+). E332 is a catalytic residue. 2 residues coordinate Zn(2+): H335 and H341.

This sequence belongs to the peptidase M72 family. Zn(2+) is required as a cofactor.

The catalysed reaction is Cleavage of Xaa-|-Asp, Xaa-|-Glu and Xaa-|-cysteic acid bonds.. In terms of biological role, metalloprotease, specifically cleaves on the N-terminal side of aspartyl, glutamyl and cysteic acid residues. This chain is Peptidyl-Asp metalloendopeptidase, found in Xanthomonas campestris pv. campestris (strain ATCC 33913 / DSM 3586 / NCPPB 528 / LMG 568 / P 25).